The sequence spans 814 residues: Testis-specific zinc finger protein topi (814 aa).

10 C2H2-type zinc fingers span residues Asn228 to His250, Val275 to His297, Leu360 to His382, Phe429 to His453, Leu467 to His490, Tyr511 to His533, Phe539 to His564, Tyr570 to His592, Tyr598 to His620, and Tyr626 to His649. The tract at residues Thr669–Thr705 is disordered. The span at Ala691–Thr705 shows a compositional bias: polar residues.

Interacts with comr. Expressed in testis; primary spermatocytes.

It localises to the nucleus. In terms of biological role, required for male meiotic division and spermatid differentiation. Required for accumulation of aly and comr on chromatin. May function as a transcription factor. The polypeptide is Testis-specific zinc finger protein topi (topi) (Drosophila melanogaster (Fruit fly)).